Consider the following 151-residue polypeptide: Probable cGMP 3',5'-cyclic phosphodiesterase subunit delta (151 aa).

Belongs to the PDE6D/unc-119 family. As to quaternary structure, interacts with Pde6.

It is found in the nucleus. The protein localises to the cytoplasm. The chain is Probable cGMP 3',5'-cyclic phosphodiesterase subunit delta from Drosophila simulans (Fruit fly).